The following is a 99-amino-acid chain: Small ribosomal subunit protein eS24 (99 aa).

The protein belongs to the eukaryotic ribosomal protein eS24 family.

This chain is Small ribosomal subunit protein eS24, found in Methanothrix thermoacetophila (strain DSM 6194 / JCM 14653 / NBRC 101360 / PT) (Methanosaeta thermophila).